A 622-amino-acid chain; its full sequence is Mitochondrial distribution and morphology protein 34 (622 aa).

In terms of domain architecture, SMP-LTD spans 1-204 (MSFKVNWNSL…LPTLIHQLSL (204 aa)). 3 disordered regions span residues 364-393 (YSNK…DNTV), 442-468 (LETM…RAYQ), and 572-592 (LDGG…NFRP). The span at 372 to 385 (KPKRRRIKVHKKSK) shows a compositional bias: basic residues. A compositionally biased stretch (low complexity) spans 446–455 (STGSSSSASS). Over residues 577-587 (NSANTNNSSGG) the composition is skewed to polar residues.

Belongs to the MDM34 family. Component of the ER-mitochondria encounter structure (ERMES) or MDM complex, composed of MMM1, MDM10, MDM12 and MDM34.

It is found in the mitochondrion outer membrane. Functionally, component of the ERMES/MDM complex, which serves as a molecular tether to connect the endoplasmic reticulum (ER) and mitochondria. Components of this complex are involved in the control of mitochondrial shape and protein biogenesis, and function in nonvesicular lipid trafficking between the ER and mitochondria. MDM34 is required for the interaction of the ER-resident membrane protein MMM1 and the outer mitochondrial membrane-resident beta-barrel protein MDM10. In Candida albicans (strain WO-1) (Yeast), this protein is Mitochondrial distribution and morphology protein 34.